A 237-amino-acid polypeptide reads, in one-letter code: Class B acid phosphatase (237 aa).

An N-terminal signal peptide occupies residues 1-23 (MRKVTLVFSAIAFAFSLNGVVQA). The active-site Nucleophile is the aspartate 69. Mg(2+) is bound by residues aspartate 69 and aspartate 71. Residue aspartate 71 is the Proton donor of the active site. Residues 137 to 138 (TG) and lysine 177 contribute to the substrate site. Aspartate 192 is a Mg(2+) binding site.

This sequence belongs to the class B bacterial acid phosphatase family. As to quaternary structure, homotetramer. The cofactor is Mg(2+).

It localises to the periplasm. It catalyses the reaction a phosphate monoester + H2O = an alcohol + phosphate. Dephosphorylates several organic phosphate monoesters. Also has a phosphotransferase activity catalyzing the transfer of low-energy phosphate groups from organic phosphate monoesters to free hydroxyl groups of various organic compounds. This Xenorhabdus bovienii (strain SS-2004) (Xenorhabdus nematophila subsp. bovienii) protein is Class B acid phosphatase.